The primary structure comprises 132 residues: Extracellular small neutral protease (132 aa).

Ca(2+) is bound by residues Asp-76 and Thr-78. His-83 contributes to the Zn(2+) binding site. The active site involves Glu-84. The Zn(2+) site is built by His-87 and Asp-93. A disulfide bond links Cys-99 and Cys-112.

Belongs to the peptidase M7 family. Ca(2+) serves as cofactor. It depends on Zn(2+) as a cofactor.

The protein localises to the secreted. The catalysed reaction is Hydrolyzes proteins with a preference for Tyr or Phe in the P1' position. Has no action on amino-acid p-nitroanilides.. Functionally, specifically hydrolyzes the peptide bond at the imino side of aromatic residues. The protein is Extracellular small neutral protease (snpA) of Streptomyces caespitosus.